The sequence spans 346 residues: Integrin beta-1-binding protein 2 (346 aa).

4 residues coordinate Zn(2+): C5, C10, C24, and H27. The 60-residue stretch at 5 to 64 (CHNKGCGQHFDPQTNLPDSCCHHPGVPVFHDALKGWSCCRKRTVDFSEFLNIKGCTVGPH) folds into the CHORD 1 domain. The SH3-binding motif lies at 28–31 (PGVP). Zn(2+) contacts are provided by C42, C43, C59, and H64. The SH3-binding motif lies at 70 to 78 (PEAPQPEGP). Residues 70–113 (PEAPQPEGPATSSSLLEQKPPNTIPKSAETLRRERPKSDLPPKL) form a disordered region. Polar residues predominate over residues 79 to 94 (ATSSSLLEQKPPNTIP). Positions 98–109 (ETLRRERPKSDL) are enriched in basic and acidic residues. Zn(2+)-binding residues include C150 and C155. The 60-residue stretch at 150-209 (CQNPGCDAVYQGSESDATPCTYHPGAPRFHEGMKSWSCCGIQTLDFGVFLAQPGCRVGRH) folds into the CHORD 2 domain. The SH2-binding motif lies at 159-162 (YQGS). Positions 169 and 172 each coordinate Zn(2+). Residues 173 to 176 (PGAP) carry the SH3-binding motif. C187, C188, C204, and H209 together coordinate Zn(2+). Positions 216 to 305 (LASCRHDWHQ…ADPGFWAQLE (90 aa)) constitute a CS domain. The short motif at 235–238 (YGQI) is the SH2-binding element. The disordered stretch occupies residues 311-346 (AEKSKSGVGLEMDEEESEDSDDDLSWTEEEEEAMGE). Positions 321 to 346 (EMDEEESEDSDDDLSWTEEEEEAMGE) are enriched in acidic residues.

As to quaternary structure, interacts with beta-1 integrin subunit. This interaction is regulated by divalent cations, and it occurs only in absence of calcium.

Its function is as follows. May play a role during maturation and/or organization of muscles cells. The polypeptide is Integrin beta-1-binding protein 2 (ITGB1BP2) (Sus scrofa (Pig)).